The following is a 308-amino-acid chain: Acetaldehyde dehydrogenase (308 aa).

10–13 (SGNI) contributes to the NAD(+) binding site. Catalysis depends on Cys-128, which acts as the Acyl-thioester intermediate. NAD(+) is bound by residues 159 to 167 (SAGPGTRAN) and Asn-285.

The protein belongs to the acetaldehyde dehydrogenase family.

The catalysed reaction is acetaldehyde + NAD(+) + CoA = acetyl-CoA + NADH + H(+). The chain is Acetaldehyde dehydrogenase from Salinispora tropica (strain ATCC BAA-916 / DSM 44818 / JCM 13857 / NBRC 105044 / CNB-440).